The sequence spans 957 residues: Atromentin synthetase (957 aa).

The adenylation (A) domain stretch occupies residues Ser59–Val464. The Carrier domain maps to Thr596–Val674. A thiolation and peptide carrier (T) domain region spans residues Asp601–Asn671. Ser633 carries the post-translational modification O-(pantetheine 4'-phosphoryl)serine. Positions Pro697–Ile947 are thioesterase (TE) domain.

The protein belongs to the ATP-dependent AMP-binding enzyme family.

It functions in the pathway secondary metabolite biosynthesis. In terms of biological role, the L-tyrosine:2-oxoglutarate aminotransferase atrD and the atromentin synthetase atrA catalyze consecutive steps to turn over L-tyrosine into atromentin, which represents the generic precursor molecule for the entire terphenylquinone and pulvinic acid family of pigments, which are widely distributed secondary metabolites in homobasidiomycetes. The first step is catalyzed by atrD which converts L-tyrosine in to 4-hydroxyphenylpyruvate (4-HPP). Adenylation of two 4-HPP monomers by the atrA adenylation (A) domain, ester bond formation between monomers and atrA, and symmetric C-C-bond formation between two monomers by atrA leads to atromentin. This chain is Atromentin synthetase, found in Tapinella panuoides (Oyster rollrim mushroom).